The primary structure comprises 1926 residues: Myosin-15 (1926 aa).

Positions 29–79 constitute a Myosin N-terminal SH3-like domain; it reads DGKKKCWIPDGENAYIEAEVKGSEDDGTVIVETADGESLSIKEDKIQQMNP. The Myosin motor domain maps to 83–770; it reads EMIEDMAMLT…FLGQLEAIRD (688 aa). Position 127 is an N6,N6,N6-trimethyllysine (K127). Residue 176-183 coordinates ATP; the sequence is GESGAGKT. 2 actin-binding regions span residues 647-669 and 749-763; these read LNKL…NPNV and RFGI…GFLG. One can recognise an IQ domain in the interval 773 to 802; sequence LSKVFTLFQARAQGKLMRIKFQKILEERDA. Residues 833 to 1926 adopt a coiled-coil conformation; the sequence is KSSEVGEEVA…REFGKKVQEE (1094 aa).

This sequence belongs to the TRAFAC class myosin-kinesin ATPase superfamily. Myosin family. Muscle myosin is a hexameric protein that consists of 2 heavy chain subunits (MHC), 2 alkali light chain subunits (MLC) and 2 regulatory light chain subunits (MLC-2).

It is found in the cytoplasm. It localises to the myofibril. Functionally, muscle contraction. The sequence is that of Myosin-15 (MYH15) from Homo sapiens (Human).